We begin with the raw amino-acid sequence, 61 residues long: Large ribosomal subunit protein bL28 (61 aa).

This sequence belongs to the bacterial ribosomal protein bL28 family.

This is Large ribosomal subunit protein bL28 from Nocardioides sp. (strain ATCC BAA-499 / JS614).